The chain runs to 494 residues: Probable malate:quinone oxidoreductase 3 (494 aa).

This sequence belongs to the MQO family. It depends on FAD as a cofactor.

It catalyses the reaction (S)-malate + a quinone = a quinol + oxaloacetate. The protein operates within carbohydrate metabolism; tricarboxylic acid cycle; oxaloacetate from (S)-malate (quinone route): step 1/1. In Staphylococcus epidermidis (strain ATCC 35984 / DSM 28319 / BCRC 17069 / CCUG 31568 / BM 3577 / RP62A), this protein is Probable malate:quinone oxidoreductase 3.